We begin with the raw amino-acid sequence, 269 residues long: Basic leucine zipper 19 (269 aa).

One can recognise a bZIP domain in the interval 140–196 (DPKRVKRILANRQSAQRSRVRKLQYISELERSVTTLQMEVSALSPRVAFLDHQRSLL). The interval 142–161 (KRVKRILANRQSAQRSRVRK) is basic motif. The segment at 168 to 196 (LERSVTTLQMEVSALSPRVAFLDHQRSLL) is leucine-zipper.

In terms of tissue distribution, expressed in roots and shoots.

The protein localises to the nucleus. In terms of biological role, transcription regulator. The chain is Basic leucine zipper 19 (BZIP19) from Oryza sativa subsp. japonica (Rice).